A 404-amino-acid chain; its full sequence is Beta-ketoacyl-[acyl-carrier-protein] synthase III, chloroplastic (404 aa).

The N-terminal 43 residues, 1-43 (MANASGFFTHPSIPNLRSRIHVPVRVSGSGFCVSNRFSKRVLC), are a transit peptide targeting the chloroplast. Residues Cys179, His330, and Asn360 contribute to the active site.

The protein belongs to the thiolase-like superfamily. FabH family.

The protein localises to the plastid. It localises to the chloroplast. It catalyses the reaction malonyl-[ACP] + acetyl-CoA + H(+) = 3-oxobutanoyl-[ACP] + CO2 + CoA. Its pathway is lipid metabolism; fatty acid biosynthesis. Catalyzes the condensation reaction of fatty acid synthesis by the addition to an acyl acceptor of two carbons from malonyl-ACP. KAS III catalyzes the first condensation reaction which initiates fatty acid synthesis and may therefore play a role in governing the total rate of fatty acid production. Possesses both acetoacetyl-ACP synthase and acetyl transacylase activities. This Arabidopsis thaliana (Mouse-ear cress) protein is Beta-ketoacyl-[acyl-carrier-protein] synthase III, chloroplastic.